The chain runs to 412 residues: Subtilisin-like protease 6 (412 aa).

The first 20 residues, 1–20 (MGFITKAIPIVLAALSTVNG), serve as a signal peptide directing secretion. Positions 21–126 (AKILEAGPHA…VVRTSTNGTN (106 aa)) are excised as a propeptide. Residues 36 to 120 (KYIVVMKREV…YIEPDFVVRT (85 aa)) form the Inhibitor I9 domain. 2 N-linked (GlcNAc...) asparagine glycosylation sites follow: N123 and N126. The Peptidase S8 domain maps to 135–412 (SWGLARVSSK…SKLIYNGSGK (278 aa)). Residues D167 and H198 each act as charge relay system in the active site. N-linked (GlcNAc...) asparagine glycans are attached at residues N252 and N264. S358 serves as the catalytic Charge relay system. N-linked (GlcNAc...) asparagine glycosylation is present at N408.

Belongs to the peptidase S8 family.

The protein localises to the secreted. Its function is as follows. Secreted subtilisin-like serine protease with keratinolytic activity that contributes to pathogenicity. The chain is Subtilisin-like protease 6 (SUB6) from Trichophyton equinum (Horse ringworm fungus).